The following is a 262-amino-acid chain: Phosphatidylglycerol--prolipoprotein diacylglyceryl transferase (262 aa).

4 consecutive transmembrane segments (helical) span residues 9 to 29 (LGPL…ILAV), 41 to 61 (IIPD…ILGA), 80 to 100 (IFAI…GALV), and 109 to 129 (LINT…AQSL). Residue R131 participates in a 1,2-diacyl-sn-glycero-3-phospho-(1'-sn-glycerol) binding. The next 3 helical transmembrane spans lie at 167–187 (QPTF…ILIF), 197–217 (GHIT…IEGM), and 226–246 (GLRV…MIVI).

The protein belongs to the Lgt family.

It localises to the cell membrane. The enzyme catalyses L-cysteinyl-[prolipoprotein] + a 1,2-diacyl-sn-glycero-3-phospho-(1'-sn-glycerol) = an S-1,2-diacyl-sn-glyceryl-L-cysteinyl-[prolipoprotein] + sn-glycerol 1-phosphate + H(+). It participates in protein modification; lipoprotein biosynthesis (diacylglyceryl transfer). In terms of biological role, catalyzes the transfer of the diacylglyceryl group from phosphatidylglycerol to the sulfhydryl group of the N-terminal cysteine of a prolipoprotein, the first step in the formation of mature lipoproteins. This is Phosphatidylglycerol--prolipoprotein diacylglyceryl transferase from Streptococcus pneumoniae (strain P1031).